Consider the following 513-residue polypeptide: MSDKLIIFDTTLRDGEQSPGASMTREEKIRIARQLERLKVDVIEAGFAASSNGDFEAIRSIAQVVKDSTICSLARANDKDIARAAEALKPANSFRIHTFIATSALHMEKKLRMTPDQVYEQARLAVRFARQFTDDIEFSPEDGSRSDMDFLCRVLEGVIAEGATTINLPDTVGYAVPEGYAELIRSVRERIPNSDKAVWSVHCHNDLGMAVANSLAAVKLGGARQIECTINGLGERAGNTSLEEVVMAVKTRRDYFNMDVGIDTTQIVPASKLVSQITGFVVQPNKAVVGANAFAHASGIHQDGVLKARDTYEIMRAEDVGWTANKIVLGKLSGRNAFKQRLQELGVQLESEAEINAAFARFKELADQKAEIFDEDIMAIVSDEEQEHANEHYRFISLSQRSETGERPHARVVFNIDGSEQTGEAEGNGPVDATLHAIEGKVNSGAELVLYSVNAITAGTQAQGEVTVRLSKAGRIVNGVGTDPDIVAASAKAYLAALNKLHDKAVQKINPQI.

The 264-residue stretch at 5-268 folds into the Pyruvate carboxyltransferase domain; it reads LIIFDTTLRD…DVGIDTTQIV (264 aa). The Mn(2+) site is built by Asp14, His202, His204, and Asn239. The segment at 394–513 is regulatory domain; it reads RFISLSQRSE…KAVQKINPQI (120 aa).

It belongs to the alpha-IPM synthase/homocitrate synthase family. LeuA type 1 subfamily. In terms of assembly, homodimer. Mn(2+) is required as a cofactor.

The protein localises to the cytoplasm. The catalysed reaction is 3-methyl-2-oxobutanoate + acetyl-CoA + H2O = (2S)-2-isopropylmalate + CoA + H(+). It participates in amino-acid biosynthesis; L-leucine biosynthesis; L-leucine from 3-methyl-2-oxobutanoate: step 1/4. Its function is as follows. Catalyzes the condensation of the acetyl group of acetyl-CoA with 3-methyl-2-oxobutanoate (2-ketoisovalerate) to form 3-carboxy-3-hydroxy-4-methylpentanoate (2-isopropylmalate). This is 2-isopropylmalate synthase from Cupriavidus metallidurans (strain ATCC 43123 / DSM 2839 / NBRC 102507 / CH34) (Ralstonia metallidurans).